An 859-amino-acid polypeptide reads, in one-letter code: DNA mismatch repair protein MutS (859 aa).

ATP is bound at residue 618–625 (GPNMGGKS). The tract at residues 803–829 (RDHDVQQNTEQQGTQQNMSFVPSAPSP) is disordered. Low complexity predominate over residues 808–819 (QQNTEQQGTQQN).

Belongs to the DNA mismatch repair MutS family.

In terms of biological role, this protein is involved in the repair of mismatches in DNA. It is possible that it carries out the mismatch recognition step. This protein has a weak ATPase activity. The protein is DNA mismatch repair protein MutS of Shewanella pealeana (strain ATCC 700345 / ANG-SQ1).